The following is a 155-amino-acid chain: Small ribosomal subunit protein uS7cz/uS7cy (155 aa).

Belongs to the universal ribosomal protein uS7 family. As to quaternary structure, part of the 30S ribosomal subunit.

The protein localises to the plastid. The protein resides in the chloroplast. Its function is as follows. One of the primary rRNA binding proteins, it binds directly to 16S rRNA where it nucleates assembly of the head domain of the 30S subunit. The sequence is that of Small ribosomal subunit protein uS7cz/uS7cy (rps7-A) from Guizotia abyssinica (Niger).